Reading from the N-terminus, the 493-residue chain is Hexokinase (493 aa).

The 455-residue stretch at 27-481 folds into the Hexokinase domain; the sequence is EELSWRINKF…SGKGAAITAA (455 aa). Residues 91–239 are hexokinase small subdomain; the sequence is TGQEKGTYYA…AIPAKVCCVL (149 aa). 102–107 provides a ligand contact to ATP; the sequence is DFGGTN. Positions 177–203 are glucose-binding; it reads SVGFTFSFPCTSPSINCSILIDWTKGF. The interval 240–470 is hexokinase large subdomain; sequence NDAVGTLMSC…ENLIIIPADD (231 aa).

Belongs to the hexokinase family.

It catalyses the reaction a D-hexose + ATP = a D-hexose 6-phosphate + ADP + H(+). It carries out the reaction D-mannose + ATP = D-mannose 6-phosphate + ADP + H(+). The enzyme catalyses D-fructose + ATP = D-fructose 6-phosphate + ADP + H(+). The catalysed reaction is D-glucose + ATP = D-glucose 6-phosphate + ADP + H(+). The protein operates within carbohydrate metabolism; hexose metabolism. It functions in the pathway carbohydrate degradation; glycolysis; D-glyceraldehyde 3-phosphate and glycerone phosphate from D-glucose: step 1/4. Its function is as follows. Catalyzes the phosphorylation of various hexoses to hexose 6-phosphate. The sequence is that of Hexokinase (HK) from Plasmodium falciparum.